Reading from the N-terminus, the 364-residue chain is Probable dual-specificity RNA methyltransferase RlmN (364 aa).

The active-site Proton acceptor is the glutamate 107. A Radical SAM core domain is found at 113 to 346; the sequence is HEYGNSVCVT…ATIRREQGAD (234 aa). Cysteines 120 and 351 form a disulfide. The [4Fe-4S] cluster site is built by cysteine 127, cysteine 131, and cysteine 134. S-adenosyl-L-methionine-binding positions include 177-178, serine 209, 232-234, and asparagine 308; these read GE and SLH. Cysteine 351 functions as the S-methylcysteine intermediate in the catalytic mechanism.

The protein belongs to the radical SAM superfamily. RlmN family. The cofactor is [4Fe-4S] cluster.

The protein localises to the cytoplasm. The catalysed reaction is adenosine(2503) in 23S rRNA + 2 reduced [2Fe-2S]-[ferredoxin] + 2 S-adenosyl-L-methionine = 2-methyladenosine(2503) in 23S rRNA + 5'-deoxyadenosine + L-methionine + 2 oxidized [2Fe-2S]-[ferredoxin] + S-adenosyl-L-homocysteine. It catalyses the reaction adenosine(37) in tRNA + 2 reduced [2Fe-2S]-[ferredoxin] + 2 S-adenosyl-L-methionine = 2-methyladenosine(37) in tRNA + 5'-deoxyadenosine + L-methionine + 2 oxidized [2Fe-2S]-[ferredoxin] + S-adenosyl-L-homocysteine. Functionally, specifically methylates position 2 of adenine 2503 in 23S rRNA and position 2 of adenine 37 in tRNAs. Confers resistance to some classes of antibiotics. This is Probable dual-specificity RNA methyltransferase RlmN from Staphylococcus saprophyticus subsp. saprophyticus (strain ATCC 15305 / DSM 20229 / NCIMB 8711 / NCTC 7292 / S-41).